Consider the following 417-residue polypeptide: UDP-N-acetylglucosamine 1-carboxyvinyltransferase (417 aa).

Phosphoenolpyruvate is bound at residue Lys22–Asn23. Arg92 is a binding site for UDP-N-acetyl-alpha-D-glucosamine. Cys116 (proton donor) is an active-site residue. Cys116 is subject to 2-(S-cysteinyl)pyruvic acid O-phosphothioketal. Residues Asp304 and Ile326 each contribute to the UDP-N-acetyl-alpha-D-glucosamine site.

The protein belongs to the EPSP synthase family. MurA subfamily.

Its subcellular location is the cytoplasm. The enzyme catalyses phosphoenolpyruvate + UDP-N-acetyl-alpha-D-glucosamine = UDP-N-acetyl-3-O-(1-carboxyvinyl)-alpha-D-glucosamine + phosphate. The protein operates within cell wall biogenesis; peptidoglycan biosynthesis. Cell wall formation. Adds enolpyruvyl to UDP-N-acetylglucosamine. The chain is UDP-N-acetylglucosamine 1-carboxyvinyltransferase from Geobacter metallireducens (strain ATCC 53774 / DSM 7210 / GS-15).